Reading from the N-terminus, the 316-residue chain is Ribonuclease Z (316 aa).

The Zn(2+) site is built by His-63, His-65, Asp-67, His-68, His-143, Asp-213, and His-271. Asp-67 functions as the Proton acceptor in the catalytic mechanism.

The protein belongs to the RNase Z family. In terms of assembly, homodimer. The cofactor is Zn(2+).

It catalyses the reaction Endonucleolytic cleavage of RNA, removing extra 3' nucleotides from tRNA precursor, generating 3' termini of tRNAs. A 3'-hydroxy group is left at the tRNA terminus and a 5'-phosphoryl group is left at the trailer molecule.. Functionally, zinc phosphodiesterase, which displays some tRNA 3'-processing endonuclease activity. Probably involved in tRNA maturation, by removing a 3'-trailer from precursor tRNA. The sequence is that of Ribonuclease Z from Bacteroides thetaiotaomicron (strain ATCC 29148 / DSM 2079 / JCM 5827 / CCUG 10774 / NCTC 10582 / VPI-5482 / E50).